The following is a 549-amino-acid chain: Glucose-6-phosphate isomerase (549 aa).

Residue E355 is the Proton donor of the active site. Active-site residues include H386 and K514.

This sequence belongs to the GPI family.

The protein resides in the cytoplasm. It catalyses the reaction alpha-D-glucose 6-phosphate = beta-D-fructose 6-phosphate. It functions in the pathway carbohydrate biosynthesis; gluconeogenesis. The protein operates within carbohydrate degradation; glycolysis; D-glyceraldehyde 3-phosphate and glycerone phosphate from D-glucose: step 2/4. Functionally, catalyzes the reversible isomerization of glucose-6-phosphate to fructose-6-phosphate. The sequence is that of Glucose-6-phosphate isomerase from Salmonella schwarzengrund (strain CVM19633).